Consider the following 377-residue polypeptide: MRRAEENNGFGTIPKRRNQHTPFYASIGMIVVIIVAFTSYHITSYGDDRNRAMRQYSFTFSLAYLAFLVGELLRRCCLFAEEYRHIETRYNGSLKKAIQTTFSFGHNNVLFVASLLFFVVFVASNDPNGSSSVIQGNSTAEPHTEMRQTSGWQGLWGQFIISALLTPLVVHLLGLRELSKVEESQLNEKENKNVADGLAWSYYFGYLKFVLPELEKQIEKTSKFRSKEKFVKKMFILIPSNCFWDDKIPGSDYDPQNRITFEGNTEPLEKTRGGVFLRHYKHSVYEIKDGENEPWFCIMEYATPLLTLYDMSVAQPGELSREERDAQVVVFLRKLQDILEGDRACQGKYELVTFSPDRDLADVMLRKLKDSELEIGG.

Over 1 to 21 (MRRAEENNGFGTIPKRRNQHT) the chain is Cytoplasmic. Residues 22–42 (PFYASIGMIVVIIVAFTSYHI) traverse the membrane as a helical segment. Over 43-57 (TSYGDDRNRAMRQYS) the chain is Extracellular. Residues 58–80 (FTFSLAYLAFLVGELLRRCCLFA) traverse the membrane as a helical segment. The Cytoplasmic segment spans residues 81 to 101 (EEYRHIETRYNGSLKKAIQTT). Residues 102–122 (FSFGHNNVLFVASLLFFVVFV) traverse the membrane as a helical segment. Over 123-154 (ASNDPNGSSSVIQGNSTAEPHTEMRQTSGWQG) the chain is Extracellular. Residues 155–175 (LWGQFIISALLTPLVVHLLGL) form a helical membrane-spanning segment. At 176–377 (RELSKVEESQ…LKDSELEIGG (202 aa)) the chain is on the cytoplasmic side. Residues Tyr-206, Arg-272, 278 to 279 (RH), and Thr-303 contribute to the 2',3'-cGAMP site. 3',3'-c-di-GMP-binding positions include Tyr-206, Arg-272, Arg-278, and 300–303 (EYAT).

This sequence belongs to the TMEM173 family. As to quaternary structure, homodimer.

The protein localises to the endoplasmic reticulum membrane. Functionally, sensor of cytosolic DNA from bacteria and viruses that promotes autophagy. Acts by recognizing and binding cyclic GMP-AMP (cGAMP), a messenger produced by CGAS in response to DNA in the cytosol. Following cGAMP-binding, promotes the formation of autophagosomes, leading to target cytosolic DNA for degradation by the lysosome. Exhibits guanine base-specific ligand recognition. Binds 3'-3'linked cGAMP, 2'-3' linked cGAMP and 3'-3' linked c-di-GMP with much greater affinity as compared to 3'-3' linked c-di-AMP. Lacks the C-terminal tail (CTT) found in mammalian orthologs which is essential for interferon signaling. The chain is Stimulator of interferon genes protein from Nematostella vectensis (Starlet sea anemone).